The primary structure comprises 399 residues: MTQLISIDKEQEEAGMTQATELLDPALKPAETKAKRSSRKKATTAVVEPATTIAPTADVDAIDDEDSVGEDEDAAAKAKAKVRKTYTEDSIRLYLQEIGRIRLLRADEEIELARQIADLLALERIRDELLEQLDRLPSDAEWAAAVDSPLDEFRRRLFRGRRAKDKMVQSNLRLVVSIAKKYMNRGLSFQDLIQEGSLGLIRAAEKFDHEKGYKFSTYATWWIRQAITRAIADQSRTIRLPVHLYETISRIKKTTKLLSQEMGRKPTEEEIATRMEMTIEKLRFIAKSAQLPISLETPIGKEEDSRLGDFIEADGETPEDEVAKNLLREDLEGVLSTLSPRERDVLRLRYGLDDGRMKTLEEIGQLFNVTRERIRQIEAKALRKLRHPNRNSILKEYIR.

The tract at residues 1–73 is disordered; it reads MTQLISIDKE…DEDSVGEDED (73 aa). A compositionally biased stretch (acidic residues) spans 60-73; it reads DAIDDEDSVGEDED. A sigma-70 factor domain-2 region spans residues 167–237; that stretch reads MVQSNLRLVV…TRAIADQSRT (71 aa). An Interaction with polymerase core subunit RpoC motif is present at residues 191–194; it reads DLIQ. Residues 246–321 are sigma-70 factor domain-3; it reads ETISRIKKTT…EADGETPEDE (76 aa). The segment at 334 to 387 is sigma-70 factor domain-4; that stretch reads VLSTLSPRERDVLRLRYGLDDGRMKTLEEIGQLFNVTRERIRQIEAKALRKLRH. The H-T-H motif DNA-binding region spans 360-379; it reads LEEIGQLFNVTRERIRQIEA.

It belongs to the sigma-70 factor family. RpoD/SigA subfamily. As to quaternary structure, interacts transiently with the RNA polymerase catalytic core.

Its subcellular location is the cytoplasm. Its function is as follows. Sigma factors are initiation factors that promote the attachment of RNA polymerase to specific initiation sites and are then released. This sigma factor is the primary sigma factor during exponential growth. The chain is RNA polymerase sigma factor SigA1 from Synechococcus elongatus (strain ATCC 33912 / PCC 7942 / FACHB-805) (Anacystis nidulans R2).